Consider the following 198-residue polypeptide: MNILVIKSSVFGDNGNSSALVNAQVDALKAKHPQATVRVRDLSTDPIPHLDGNRVSAFFTSATQRTDEQQAIDAFSLALIDEIKAADHIVLGLPMYNFGIPSQLKSWIDHVARAGITFRYTEKGPQGLLENKPVTVLAARGGIYAGTSNDTVTPYIKLFFGFIGITDVEFVFAEGLNMGDDVKEKALAVARSELLAST.

FMN-binding positions include Ser9 and 95–98 (MYNF).

This sequence belongs to the azoreductase type 1 family. As to quaternary structure, homodimer. Requires FMN as cofactor.

The enzyme catalyses 2 a quinone + NADH + H(+) = 2 a 1,4-benzosemiquinone + NAD(+). It carries out the reaction N,N-dimethyl-1,4-phenylenediamine + anthranilate + 2 NAD(+) = 2-(4-dimethylaminophenyl)diazenylbenzoate + 2 NADH + 2 H(+). In terms of biological role, quinone reductase that provides resistance to thiol-specific stress caused by electrophilic quinones. Its function is as follows. Also exhibits azoreductase activity. Catalyzes the reductive cleavage of the azo bond in aromatic azo compounds to the corresponding amines. The chain is FMN-dependent NADH:quinone oxidoreductase from Alcanivorax borkumensis (strain ATCC 700651 / DSM 11573 / NCIMB 13689 / SK2).